A 717-amino-acid polypeptide reads, in one-letter code: Choline transporter-like protein 5 (717 aa).

A disordered region spans residues 1 to 24 (MNDTEKPADTASEEEDFGDPRTYD). The Cytoplasmic segment spans residues 1-38 (MNDTEKPADTASEEEDFGDPRTYDPDFKGPVSNRSCTD). The chain crosses the membrane as a helical span at residues 39 to 59 (VLCCMIFLLCIVGYIVLGLVA). Residues 60–242 (WVHGDPRRAA…KVFEDYATTW (183 aa)) lie on the Extracellular side of the membrane. N-linked (GlcNAc...) asparagine glycosylation is found at asparagine 88 and asparagine 190. The chain crosses the membrane as a helical span at residues 243–263 (YWILIGLMIAMVLSWIFLILL). Over 264–265 (RF) the chain is Cytoplasmic. A helical transmembrane segment spans residues 266 to 286 (IAGCLFWVFMIGVIGIIGYGI). At 287-325 (WHCYQQYTNLQEHPRSVLTVYDIGIQTNISMYFELQQTW) the chain is on the extracellular side. N-linked (GlcNAc...) asparagine glycosylation occurs at asparagine 314. The helical transmembrane segment at 326 to 346 (FTLMIILCIIEVIVILMLIFL) threads the bilayer. Topologically, residues 347–351 (RNRIR) are cytoplasmic. The helical transmembrane segment at 352 to 372 (VAIILLKEGSKAIGYVPSTLV) threads the bilayer. Residues 373–374 (YP) are Extracellular-facing. The helical transmembrane segment at 375–395 (ALTFILLSICICYWVVTAVFL) threads the bilayer. At 396–460 (ATSGVPVYKV…QYIPTFHVYN (65 aa)) the chain is on the cytoplasmic side. Residues 461–481 (LFVFLWLINFVIALGQCALAG) traverse the membrane as a helical segment. Residues 482–515 (AFATYYWAMKKPDDIPRYPLFTAFGRAIRYHTGS) lie on the Extracellular side of the membrane. The chain crosses the membrane as a helical span at residues 516–536 (LAFGSLIIALIQMFKIVLEYL). Over 537-610 (NHRLKRTENT…KVAVTDEVTY (74 aa)) the chain is Cytoplasmic. The helical transmembrane segment at 611–631 (FVLFLGKILVAGSIGVLAFLF) threads the bilayer. Topologically, residues 632–649 (FTQRLPVIAQGPASLNYY) are extracellular. Residues 650 to 670 (WVPLLTVILGSYLIAHGFFSV) form a helical membrane-spanning segment. The Cytoplasmic segment spans residues 671 to 717 (YAMCVETIFICFLEDLERNDGSTARPYYVSQPLLKIFQEENLQTKQQ).

It belongs to the CTL (choline transporter-like) family.

The protein resides in the cell membrane. It catalyses the reaction choline(out) + n H(+)(in) = choline(in) + n H(+)(out). Functionally, choline/H+ antiporter. In Macaca fascicularis (Crab-eating macaque), this protein is Choline transporter-like protein 5 (SLC44A5).